Reading from the N-terminus, the 126-residue chain is Protein ApaG (126 aa).

Positions 2-126 (NQRLSPIKVE…FSLAVPGLLH (125 aa)) constitute an ApaG domain.

The chain is Protein ApaG from Shewanella piezotolerans (strain WP3 / JCM 13877).